We begin with the raw amino-acid sequence, 351 residues long: UDP-3-O-acylglucosamine N-acyltransferase 1 (351 aa).

The Proton acceptor role is filled by H237.

The protein belongs to the transferase hexapeptide repeat family. LpxD subfamily. As to quaternary structure, homotrimer.

It catalyses the reaction a UDP-3-O-[(3R)-3-hydroxyacyl]-alpha-D-glucosamine + a (3R)-hydroxyacyl-[ACP] = a UDP-2-N,3-O-bis[(3R)-3-hydroxyacyl]-alpha-D-glucosamine + holo-[ACP] + H(+). It functions in the pathway bacterial outer membrane biogenesis; LPS lipid A biosynthesis. Functionally, catalyzes the N-acylation of UDP-3-O-acylglucosamine using 3-hydroxyacyl-ACP as the acyl donor. Is involved in the biosynthesis of lipid A, a phosphorylated glycolipid that anchors the lipopolysaccharide to the outer membrane of the cell. In Legionella pneumophila (strain Paris), this protein is UDP-3-O-acylglucosamine N-acyltransferase 1.